The primary structure comprises 1407 residues: DNA-directed RNA polymerase subunit beta' (1407 aa).

Zn(2+) contacts are provided by Cys70, Cys72, Cys85, and Cys88. 3 residues coordinate Mg(2+): Asp460, Asp462, and Asp464. Zn(2+)-binding residues include Cys814, Cys888, Cys895, and Cys898.

The protein belongs to the RNA polymerase beta' chain family. In terms of assembly, the RNAP catalytic core consists of 2 alpha, 1 beta, 1 beta' and 1 omega subunit. When a sigma factor is associated with the core the holoenzyme is formed, which can initiate transcription. Mg(2+) is required as a cofactor. It depends on Zn(2+) as a cofactor.

The enzyme catalyses RNA(n) + a ribonucleoside 5'-triphosphate = RNA(n+1) + diphosphate. In terms of biological role, DNA-dependent RNA polymerase catalyzes the transcription of DNA into RNA using the four ribonucleoside triphosphates as substrates. This chain is DNA-directed RNA polymerase subunit beta', found in Salmonella arizonae (strain ATCC BAA-731 / CDC346-86 / RSK2980).